Reading from the N-terminus, the 318-residue chain is HPr kinase/phosphorylase (318 aa).

Catalysis depends on residues His-143 and Lys-164. ATP is bound at residue 158 to 165 (GKSGVGKS). A Mg(2+)-binding site is contributed by Ser-165. The active-site Proton acceptor; for phosphorylation activity. Proton donor; for dephosphorylation activity is Asp-182. Residues 206 to 215 (MEIRGLGILN) form an important for the catalytic mechanism of both phosphorylation and dephosphorylation region. Residue Glu-207 coordinates Mg(2+). Residue Arg-248 is part of the active site. An important for the catalytic mechanism of dephosphorylation region spans residues 269-274 (PVKPGR).

This sequence belongs to the HPrK/P family. As to quaternary structure, homohexamer. It depends on Mg(2+) as a cofactor.

The catalysed reaction is [HPr protein]-L-serine + ATP = [HPr protein]-O-phospho-L-serine + ADP + H(+). It carries out the reaction [HPr protein]-O-phospho-L-serine + phosphate + H(+) = [HPr protein]-L-serine + diphosphate. Functionally, catalyzes the ATP- as well as the pyrophosphate-dependent phosphorylation of a specific serine residue in HPr, a phosphocarrier protein of the phosphoenolpyruvate-dependent sugar phosphotransferase system (PTS). HprK/P also catalyzes the pyrophosphate-producing, inorganic phosphate-dependent dephosphorylation (phosphorolysis) of seryl-phosphorylated HPr (P-Ser-HPr). The protein is HPr kinase/phosphorylase of Leptospira borgpetersenii serovar Hardjo-bovis (strain L550).